A 206-amino-acid polypeptide reads, in one-letter code: N-(5'-phosphoribosyl)anthranilate isomerase (206 aa).

Belongs to the TrpF family.

It carries out the reaction N-(5-phospho-beta-D-ribosyl)anthranilate = 1-(2-carboxyphenylamino)-1-deoxy-D-ribulose 5-phosphate. The protein operates within amino-acid biosynthesis; L-tryptophan biosynthesis; L-tryptophan from chorismate: step 3/5. The protein is N-(5'-phosphoribosyl)anthranilate isomerase of Pseudomonas savastanoi pv. phaseolicola (strain 1448A / Race 6) (Pseudomonas syringae pv. phaseolicola (strain 1448A / Race 6)).